The primary structure comprises 331 residues: 6-phosphogluconolactonase (331 aa).

Lys287 is modified (N6-acetyllysine).

It belongs to the cycloisomerase 2 family.

The catalysed reaction is 6-phospho-D-glucono-1,5-lactone + H2O = 6-phospho-D-gluconate + H(+). It functions in the pathway carbohydrate degradation; pentose phosphate pathway; D-ribulose 5-phosphate from D-glucose 6-phosphate (oxidative stage): step 2/3. Functionally, catalyzes the hydrolysis of 6-phosphogluconolactone to 6-phosphogluconate. The protein is 6-phosphogluconolactonase of Escherichia coli (strain SMS-3-5 / SECEC).